The chain runs to 497 residues: MEPAELEHALCGSLFSTQTPSWSSFGGPEHQEMSFLEQGDSTSWPSPAMTTSAEISLGEQRTKVSRWKSQEDVEERELPGLEGGPQSRAAAESTGLEATFPKATPLAQATPLSAVGTPTTERDSLPADCTASASSSSTDDLDQGIEFSAPAAWGDELGLVEERPAQCPSPQVPVLRLGWDDELRKPGAQVYMHFMQEHTCYDAMATSSKLVIFDTMLQIKKAFFALVANGVRAAPLWDSKKQSFVGMLTITDFILVLHRYYRSPLVQIYEIEEHKIETWREIYLQGCFKPLVSISPSDSLFEAVYTLIKNRIHRLPVLDPVSGAVLHILTHKRLLKFLHIFQRTLLPRPSFLYRTIQDLGIGTFRDLAVVLETAPILTALDIFVDRRVSALPVINEAGQVVGLYSRFDVIHLAAQQTYNHLDISVGEALRRRTLCLEGVLSCQPHETLGEVIDRIAREQVHRLVLVDETQHLLGVVSLSDILQALVLSPAGIDALGA.

Residues 16–143 (STQTPSWSSF…SSSSTDDLDQ (128 aa)) are disordered. Over residues 39-54 (GDSTSWPSPAMTTSAE) the composition is skewed to polar residues. The segment covering 68–79 (KSQEDVEERELP) has biased composition (basic and acidic residues). CBS domains follow at residues 204-265 (MATS…RSPL), 287-345 (CFKP…QRTL), and 363-423 (TFRD…HLDI). ADP is bound by residues arginine 232, 247-252 (MLTITD), valine 292, 313-314 (HR), and lysine 332. Residues arginine 232, 247 to 252 (MLTITD), valine 292, histidine 313, 313 to 314 (HR), lysine 332, threonine 363, alanine 368, 389 to 390 (SA), 405 to 408 (SRFD), arginine 432, leucine 440, histidine 461, 461 to 462 (HR), and 477 to 480 (SLSD) contribute to the AMP site. ATP is bound by residues arginine 232, 247-252 (MLTITD), valine 292, 313-314 (HR), arginine 314, and lysine 332. The AMPK pseudosubstrate motif lies at 300–321 (LFEAVYTLIKNRIHRLPVLDPV). ADP-binding positions include 405–408 (SRFD), arginine 432, leucine 440, and 461–462 (HR). ATP-binding positions include 405–408 (SRFD), arginine 432, leucine 440, and 461–462 (HR). The region spanning 435 to 494 (CLEGVLSCQPHETLGEVIDRIAREQVHRLVLVDETQHLLGVVSLSDILQALVLSPAGIDA) is the CBS 4 domain.

This sequence belongs to the 5'-AMP-activated protein kinase gamma subunit family. In terms of assembly, AMPK is a heterotrimer of an alpha catalytic subunit (PRKAA1 or PRKAA2), a beta (PRKAB1 or PRKAB2) and a gamma non-catalytic subunits (PRKAG1, PRKAG2 or PRKAG3). Interacts with FNIP1 and FNIP2. Phosphorylated by ULK1; leading to negatively regulate AMPK activity and suggesting the existence of a regulatory feedback loop between ULK1 and AMPK. Post-translationally, glycosylated; O-GlcNAcylated by OGT, promoting the AMP-activated protein kinase (AMPK) activity.

AMP/ATP-binding subunit of AMP-activated protein kinase (AMPK), an energy sensor protein kinase that plays a key role in regulating cellular energy metabolism. In response to reduction of intracellular ATP levels, AMPK activates energy-producing pathways and inhibits energy-consuming processes: inhibits protein, carbohydrate and lipid biosynthesis, as well as cell growth and proliferation. AMPK acts via direct phosphorylation of metabolic enzymes, and by longer-term effects via phosphorylation of transcription regulators. AMPK also acts as a regulator of cellular polarity by remodeling the actin cytoskeleton; probably by indirectly activating myosin. The AMPK gamma3 subunit is a non-catalytic subunit with a regulatory role in muscle energy metabolism. It mediates binding to AMP, ADP and ATP, leading to AMPK activation or inhibition: AMP-binding results in allosteric activation of alpha catalytic subunit (PRKAA1 or PRKAA2) both by inducing phosphorylation and preventing dephosphorylation of catalytic subunits. ADP also stimulates phosphorylation, without stimulating already phosphorylated catalytic subunit. ATP promotes dephosphorylation of catalytic subunit, rendering the AMPK enzyme inactive. This is 5'-AMP-activated protein kinase subunit gamma-3 (PRKAG3) from Bos taurus (Bovine).